We begin with the raw amino-acid sequence, 51 residues long: Insulin (51 aa).

3 disulfide bridges follow: Cys7/Cys37, Cys19/Cys50, and Cys36/Cys41.

The protein belongs to the insulin family. Heterodimer of a B chain and an A chain linked by two disulfide bonds.

It is found in the secreted. Its function is as follows. Insulin decreases blood glucose concentration. It increases cell permeability to monosaccharides, amino acids and fatty acids. It accelerates glycolysis, the pentose phosphate cycle, and glycogen synthesis in liver. This Anguilla rostrata (American eel) protein is Insulin (ins).